A 361-amino-acid chain; its full sequence is PTI1-like tyrosine-protein kinase At3g15890 (361 aa).

A Protein kinase domain is found at 39 to 328 (FNYDNKLGEG…ISELEANPLF (290 aa)). ATP-binding positions include 45-53 (LGEGRFGSV) and lysine 67. Residue aspartate 165 is the Proton acceptor of the active site. 2 disordered regions span residues 195 to 219 (TGDG…SGKE) and 323 to 361 (EANP…QQQE). The segment covering 351–361 (LEDKDHQQQQE) has biased composition (basic and acidic residues).

The protein belongs to the protein kinase superfamily. Tyr protein kinase family.

It carries out the reaction L-tyrosyl-[protein] + ATP = O-phospho-L-tyrosyl-[protein] + ADP + H(+). This is PTI1-like tyrosine-protein kinase At3g15890 from Arabidopsis thaliana (Mouse-ear cress).